The following is a 374-amino-acid chain: Dihydrolipoyllysine-residue acetyltransferase component of acetoin cleaving system (374 aa).

The 76-residue stretch at 9-84 (IIPIVMPKWG…PVKALLGVLA (76 aa)) folds into the Lipoyl-binding domain. The residue at position 50 (lysine 50) is an N6-lipoyllysine. The AB hydrolase-1 domain occupies 137–360 (TVLFIHGFGG…DAGHMSQMEK (224 aa)).

Requires (R)-lipoate as cofactor.

It carries out the reaction N(6)-[(R)-dihydrolipoyl]-L-lysyl-[protein] + acetyl-CoA = N(6)-[(R)-S(8)-acetyldihydrolipoyl]-L-lysyl-[protein] + CoA. It functions in the pathway ketone degradation; acetoin degradation. In terms of biological role, dihydrolipoamide acetyltransferase involved in acetoin catabolism. In Cupriavidus necator (strain ATCC 17699 / DSM 428 / KCTC 22496 / NCIMB 10442 / H16 / Stanier 337) (Ralstonia eutropha), this protein is Dihydrolipoyllysine-residue acetyltransferase component of acetoin cleaving system (acoC).